A 323-amino-acid chain; its full sequence is tRNA U34 carboxymethyltransferase (323 aa).

Carboxy-S-adenosyl-L-methionine is bound by residues K91, W105, K110, G130, 152–154 (DPT), 181–182 (IE), M196, Y200, and R315.

This sequence belongs to the class I-like SAM-binding methyltransferase superfamily. CmoB family. In terms of assembly, homotetramer.

It carries out the reaction carboxy-S-adenosyl-L-methionine + 5-hydroxyuridine(34) in tRNA = 5-carboxymethoxyuridine(34) in tRNA + S-adenosyl-L-homocysteine + H(+). Catalyzes carboxymethyl transfer from carboxy-S-adenosyl-L-methionine (Cx-SAM) to 5-hydroxyuridine (ho5U) to form 5-carboxymethoxyuridine (cmo5U) at position 34 in tRNAs. This Shigella dysenteriae serotype 1 (strain Sd197) protein is tRNA U34 carboxymethyltransferase.